Reading from the N-terminus, the 495-residue chain is uncharacterized protein (495 aa).

12 consecutive transmembrane segments (helical) span residues 43-63, 75-95, 106-126, 128-148, 168-188, 196-216, 284-304, 323-343, 366-386, 390-410, 426-446, and 461-481; these read IIIS…MPSI, TLVV…PLIF, PLNI…ALSV, LAMF…GLGI, IYFL…GFIA, WEFW…VVFL, PIMI…YLLF, GLTY…LLPL, PMAF…GWTV, VFWF…VMTF, ASAM…FPLF, and SLLA…YMFG.

It belongs to the major facilitator superfamily. CAR1 family.

The protein resides in the membrane. This is an uncharacterized protein from Schizosaccharomyces pombe (strain 972 / ATCC 24843) (Fission yeast).